A 430-amino-acid chain; its full sequence is GTPase Obg (430 aa).

In terms of domain architecture, Obg spans 1–158; the sequence is MFVDQVKISL…LDVSLELKLL (158 aa). The tract at residues 118-145 is disordered; it reads KGGRGGRGNSRFATPRNPAPDFSEKGEP. The OBG-type G domain maps to 159-329; that stretch reads ADVGLVGFPS…LLYAIADKLE (171 aa). Residues 165–172, 190–194, 212–215, 282–285, and 310–312 contribute to the GTP site; these read GFPSVGKS, FTTIK, DLPG, NKMD, and STI. Residues Ser-172 and Thr-192 each coordinate Mg(2+). The 79-residue stretch at 352-430 folds into the OCT domain; that stretch reads KHTPSQDKFT…ILGGEFEFVE (79 aa).

This sequence belongs to the TRAFAC class OBG-HflX-like GTPase superfamily. OBG GTPase family. As to quaternary structure, monomer. Mg(2+) is required as a cofactor.

It is found in the cytoplasm. Functionally, an essential GTPase which binds GTP, GDP and possibly (p)ppGpp with moderate affinity, with high nucleotide exchange rates and a fairly low GTP hydrolysis rate. Plays a role in control of the cell cycle, stress response, ribosome biogenesis and in those bacteria that undergo differentiation, in morphogenesis control. The protein is GTPase Obg of Staphylococcus aureus (strain MRSA252).